Consider the following 178-residue polypeptide: ATP-dependent protease subunit HslV (178 aa).

The active site involves T7. Residues G162, C165, and T168 each coordinate Na(+).

The protein belongs to the peptidase T1B family. HslV subfamily. As to quaternary structure, a double ring-shaped homohexamer of HslV is capped on each side by a ring-shaped HslU homohexamer. The assembly of the HslU/HslV complex is dependent on binding of ATP.

The protein localises to the cytoplasm. The enzyme catalyses ATP-dependent cleavage of peptide bonds with broad specificity.. With respect to regulation, allosterically activated by HslU binding. In terms of biological role, protease subunit of a proteasome-like degradation complex believed to be a general protein degrading machinery. The protein is ATP-dependent protease subunit HslV of Herminiimonas arsenicoxydans.